The following is a 244-amino-acid chain: Aspartate/glutamate leucyltransferase (244 aa).

This sequence belongs to the R-transferase family. Bpt subfamily.

It localises to the cytoplasm. It catalyses the reaction N-terminal L-glutamyl-[protein] + L-leucyl-tRNA(Leu) = N-terminal L-leucyl-L-glutamyl-[protein] + tRNA(Leu) + H(+). The enzyme catalyses N-terminal L-aspartyl-[protein] + L-leucyl-tRNA(Leu) = N-terminal L-leucyl-L-aspartyl-[protein] + tRNA(Leu) + H(+). Its function is as follows. Functions in the N-end rule pathway of protein degradation where it conjugates Leu from its aminoacyl-tRNA to the N-termini of proteins containing an N-terminal aspartate or glutamate. This chain is Aspartate/glutamate leucyltransferase, found in Paramagnetospirillum magneticum (strain ATCC 700264 / AMB-1) (Magnetospirillum magneticum).